Reading from the N-terminus, the 136-residue chain is NADPH-dependent 7-cyano-7-deazaguanine reductase (136 aa).

The active-site Thioimide intermediate is Cys50. Asp57 (proton donor) is an active-site residue. Residues 72–74 and 91–92 contribute to the substrate site; these read YEL and HE.

It belongs to the GTP cyclohydrolase I family. QueF type 1 subfamily.

The protein resides in the cytoplasm. It carries out the reaction 7-aminomethyl-7-carbaguanine + 2 NADP(+) = 7-cyano-7-deazaguanine + 2 NADPH + 3 H(+). It functions in the pathway tRNA modification; tRNA-queuosine biosynthesis. Functionally, catalyzes the NADPH-dependent reduction of 7-cyano-7-deazaguanine (preQ0) to 7-aminomethyl-7-deazaguanine (preQ1). This is NADPH-dependent 7-cyano-7-deazaguanine reductase from Prochlorococcus marinus (strain MIT 9312).